A 438-amino-acid polypeptide reads, in one-letter code: UPF0229 protein R01398 (438 aa).

The interval 55–107 (PARGVNEPAFQPDSNSGERRHVLPGNREFAAGDRIPKRGSGGGAGNAGAGTGQ) is disordered. The span at 93 to 105 (GSGGGAGNAGAGT) shows a compositional bias: gly residues.

This sequence belongs to the UPF0229 family.

In Rhizobium meliloti (strain 1021) (Ensifer meliloti), this protein is UPF0229 protein R01398.